Reading from the N-terminus, the 43-residue chain is Protein PsbN (43 aa).

The helical transmembrane segment at 5 to 27 (TLVAIFISCSLVSFTGYALYTAF) threads the bilayer.

Belongs to the PsbN family.

It localises to the plastid. The protein resides in the chloroplast thylakoid membrane. May play a role in photosystem I and II biogenesis. This is Protein PsbN from Exsertotheca crispa (Moss).